A 382-amino-acid chain; its full sequence is ATP phosphoribosyltransferase regulatory subunit (382 aa).

Belongs to the class-II aminoacyl-tRNA synthetase family. HisZ subfamily. In terms of assembly, heteromultimer composed of HisG and HisZ subunits.

It is found in the cytoplasm. Its pathway is amino-acid biosynthesis; L-histidine biosynthesis; L-histidine from 5-phospho-alpha-D-ribose 1-diphosphate: step 1/9. Required for the first step of histidine biosynthesis. May allow the feedback regulation of ATP phosphoribosyltransferase activity by histidine. This chain is ATP phosphoribosyltransferase regulatory subunit, found in Burkholderia cenocepacia (strain ATCC BAA-245 / DSM 16553 / LMG 16656 / NCTC 13227 / J2315 / CF5610) (Burkholderia cepacia (strain J2315)).